The chain runs to 163 residues: Lipoprotein signal peptidase (163 aa).

A run of 3 helical transmembrane segments spans residues 8–28 (FFLLGLILTVGIDQAVKYWVM), 61–81 (FSHWGLIFLTLIILIFLLWLW), and 93–113 (FGFTLIIGGAIGNLIDRICFY). Catalysis depends on residues D117 and D136. The helical transmembrane segment at 128–148 (YFAVFNLADTFITLGVIAIII) threads the bilayer.

Belongs to the peptidase A8 family.

The protein localises to the cell inner membrane. It catalyses the reaction Release of signal peptides from bacterial membrane prolipoproteins. Hydrolyzes -Xaa-Yaa-Zaa-|-(S,diacylglyceryl)Cys-, in which Xaa is hydrophobic (preferably Leu), and Yaa (Ala or Ser) and Zaa (Gly or Ala) have small, neutral side chains.. It functions in the pathway protein modification; lipoprotein biosynthesis (signal peptide cleavage). In terms of biological role, this protein specifically catalyzes the removal of signal peptides from prolipoproteins. The sequence is that of Lipoprotein signal peptidase from Bartonella henselae (strain ATCC 49882 / DSM 28221 / CCUG 30454 / Houston 1) (Rochalimaea henselae).